The primary structure comprises 363 residues: Glyceraldehyde-3-phosphate dehydrogenase, muscle (363 aa).

Residues 1–176 (MVKVGVNGFG…KYDKSLKIVS (176 aa)) are interaction with WARS. Lysine 3 is subject to N6,N6-dimethyllysine. At asparagine 7 the chain carries Deamidated asparagine. NAD(+) is bound by residues 11–12 (RI) and aspartate 33. Tyrosine 70 carries the post-translational modification Phosphotyrosine. Lysine 89 carries the post-translational modification N6-acetyllysine. Deamidated asparagine is present on asparagine 92. N6,N6-dimethyllysine is present on lysine 94. Position 98 is a deamidated asparagine (asparagine 98). Threonine 103 carries the phosphothreonine modification. Residues arginine 108 and serine 150 each coordinate NAD(+). A phosphoserine mark is found at serine 150 and serine 176. The residue at position 177 (asparagine 177) is a Deamidated asparagine. Serine 179 is subject to Phosphoserine. Residue 179 to 181 (SCT) participates in D-glyceraldehyde 3-phosphate binding. The active-site Nucleophile is cysteine 180. Cysteine 180 bears the ADP-ribosylcysteine; by autocatalysis; in irreversibly inhibited form mark. Residue cysteine 180 is modified to Cysteine persulfide. Residue cysteine 180 is modified to S-(2-succinyl)cysteine. Cysteine 180 carries the S-nitrosocysteine; in reversibly inhibited form modification. The residue at position 181 (threonine 181) is a Phosphothreonine. Asparagine 183 is subject to Deamidated asparagine. Threonine 205, threonine 210, and threonine 212 each carry phosphothreonine. Threonine 210 is a D-glyceraldehyde 3-phosphate binding site. A Glycyl lysine isopeptide (Lys-Gly) (interchain with G-Cter in SUMO2) cross-link involves residue lysine 214. The residue at position 222 (lysine 222) is an N6,N6-dimethyllysine; alternate. The residue at position 222 (lysine 222) is an N6-acetyllysine; alternate. Lysine 222 carries the N6-malonyllysine; alternate modification. Threonine 239 is modified (phosphothreonine). 239-240 (TG) contacts D-glyceraldehyde 3-phosphate. Lysine 243 carries the post-translational modification N6,N6-dimethyllysine; alternate. Residue lysine 243 is modified to N6-malonyllysine; alternate. The residue at position 247 (lysine 247) is an N6-acetyllysine. Asparagine 253 bears the Deamidated asparagine mark. An N6,N6-dimethyllysine; alternate modification is found at lysine 255. Lysine 255 is subject to N6-acetyllysine; alternate. Threonine 257 is subject to Phosphothreonine. D-glyceraldehyde 3-phosphate is bound at residue arginine 262. Threonine 265 bears the Phosphothreonine mark. Serine 269 is modified (phosphoserine). Position 275 is an S-(2-succinyl)cysteine (cysteine 275). Cysteine 275 bears the S-nitrosocysteine mark. Lysine 282 carries the post-translational modification N6-acetyllysine. Lysine 291 carries the post-translational modification N6,N6-dimethyllysine. Serine 340 is subject to Phosphoserine. Asparagine 344 carries the deamidated asparagine modification. Asparagine 344 contributes to the NAD(+) binding site. Serine 361 carries the post-translational modification Phosphoserine. N6,N6-dimethyllysine is present on lysine 362.

The protein belongs to the glyceraldehyde-3-phosphate dehydrogenase family. Homotetramer. Interacts with TPPP; the interaction is direct. Interacts (when S-nitrosylated) with SIAH1; leading to nuclear translocation. Interacts with RILPL1/GOSPEL, leading to prevent the interaction between GAPDH and SIAH1 and prevent nuclear translocation. Interacts with CHP1; the interaction increases the binding of CHP1 with microtubules. Associates with microtubules. Interacts with EIF1AD, USP25, PRKCI and WARS1. Interacts with phosphorylated RPL13A; inhibited by oxidatively-modified low-densitity lipoprotein (LDL(ox)). Component of the GAIT complex. Interacts with FKBP6; leading to inhibit GAPDH catalytic activity. Interacts with TRAF2, promoting TRAF2 ubiquitination. Interacts with TRAF3, promoting TRAF3 ubiquitination. ISGylated. In terms of processing, S-nitrosylation of Cys-180 leads to interaction with SIAH1, followed by translocation to the nucleus S-nitrosylation of Cys-275 is induced by interferon-gamma and LDL(ox) implicating the iNOS-S100A8/9 transnitrosylase complex and seems to prevent interaction with phosphorylated RPL13A and to interfere with GAIT complex activity. Post-translationally, sulfhydration at Cys-180 increases catalytic activity.

It localises to the cytoplasm. The protein localises to the cytosol. Its subcellular location is the cytoskeleton. The protein resides in the nucleus. The catalysed reaction is D-glyceraldehyde 3-phosphate + phosphate + NAD(+) = (2R)-3-phospho-glyceroyl phosphate + NADH + H(+). It catalyses the reaction S-nitroso-L-cysteinyl-[GAPDH] + L-cysteinyl-[protein] = L-cysteinyl-[GAPDH] + S-nitroso-L-cysteinyl-[protein]. It participates in carbohydrate degradation; glycolysis; pyruvate from D-glyceraldehyde 3-phosphate: step 1/5. Its activity is regulated as follows. Glyceraldehyde-3-phosphate dehydrogenase activity is inhibited by fumarate, via the formation of S-(2-succinyl)cysteine residues. Has both glyceraldehyde-3-phosphate dehydrogenase and nitrosylase activities, thereby playing a role in glycolysis and nuclear functions, respectively. Glyceraldehyde-3-phosphate dehydrogenase is a key enzyme in glycolysis that catalyzes the first step of the pathway by converting D-glyceraldehyde 3-phosphate (G3P) into 3-phospho-D-glyceroyl phosphate. Modulates the organization and assembly of the cytoskeleton. Facilitates the CHP1-dependent microtubule and membrane associations through its ability to stimulate the binding of CHP1 to microtubules. Component of the GAIT (gamma interferon-activated inhibitor of translation) complex which mediates interferon-gamma-induced transcript-selective translation inhibition in inflammation processes. Upon interferon-gamma treatment assembles into the GAIT complex which binds to stem loop-containing GAIT elements in the 3'-UTR of diverse inflammatory mRNAs (such as ceruplasmin) and suppresses their translation. Also plays a role in innate immunity by promoting TNF-induced NF-kappa-B activation and type I interferon production, via interaction with TRAF2 and TRAF3, respectively. Participates in nuclear events including transcription, RNA transport, DNA replication and apoptosis. Nuclear functions are probably due to the nitrosylase activity that mediates cysteine S-nitrosylation of nuclear target proteins such as SIRT1, HDAC2 and PRKDC. The polypeptide is Glyceraldehyde-3-phosphate dehydrogenase, muscle (Jaculus orientalis (Greater Egyptian jerboa)).